Consider the following 338-residue polypeptide: Nucleoid-associated protein CGSHiGG_07705 (338 aa).

Belongs to the YejK family.

It is found in the cytoplasm. It localises to the nucleoid. This is Nucleoid-associated protein CGSHiGG_07705 from Haemophilus influenzae (strain PittGG).